Reading from the N-terminus, the 526-residue chain is MLKHFQRLGGALFAPVLLFPFAGLVVALTIILKNPDFVGELANTNGTFYKMITVIEEGGWTVFRQLPLIFAIGLPIGLAKKAHPRACLAVLATYLTYNYFISAILTFWGPSFGVDFTQNVGGVSGLTTIAGIKTLDTSIVGAIVISGITIYIHNKFFDTKLPDFLGTFQGTTLVSAIAFVVMIPCAYITCLVWPKIQMGISSLQALMVTSGTFGVWLYTFLERILIPTGLHHFIYGPFIFGPAVVDTGIQVAWAENLLNFANSTQPLKELFPQGGFALHGNSKIFGCIGIALAMYKTARPEKKKIVSGLLIPAALTAALVGITEPLEFTFLFIAPFLFVVHAVLAATMAAVMYAFGVVKYGSGIIEIAALNWLPLMKNHSGVMFTQLAIGVVFIGIHYLVFKFLIEKYNVKTSGREDEEEETKLYTKADWKAKNGEGKETNSSDLYSGKAKAFLEAFGGKDNIEQVNNCATRLRISVKDEKKVGPDIQFKAAGAHGVVRNGKAFQVIVGLSVPQVRESFENLMEQN.

One can recognise a PTS EIIC type-1 domain in the interval 1 to 417; it reads MLKHFQRLGG…YNVKTSGRED (417 aa). A run of 12 helical transmembrane segments spans residues 12 to 32, 59 to 79, 88 to 108, 132 to 152, 173 to 193, 200 to 220, 224 to 244, 274 to 294, 305 to 325, 330 to 350, 355 to 375, and 381 to 401; these read LFAP…TIIL, GWTV…IGLA, LAVL…LTFW, IKTL…TIYI, LVSA…CLVW, ISSL…LYTF, ILIP…GPAV, GGFA…ALAM, IVSG…ITEP, FLFI…TMAA, FGVV…WLPL, and GVMF…YLVF. The 80-residue stretch at 447-526 folds into the PTS EIIB type-1 domain; it reads SGKAKAFLEA…ESFENLMEQN (80 aa). Cysteine 469 serves as the catalytic Phosphocysteine intermediate; for EIIB activity.

The protein resides in the cell membrane. Its function is as follows. The phosphoenolpyruvate-dependent sugar phosphotransferase system (sugar PTS), a major carbohydrate active -transport system, catalyzes the phosphorylation of incoming sugar substrates concomitantly with their translocation across the cell membrane. This system is involved in alpha-glucoside transport. This Fusobacterium mortiferum protein is PTS system alpha-glucoside-specific EIICB component (malB).